A 355-amino-acid polypeptide reads, in one-letter code: uncharacterized protein (355 aa).

Belongs to the ycf89 family.

It is found in the plastid. The protein localises to the chloroplast. This is an uncharacterized protein from Trieres chinensis (Marine centric diatom).